Reading from the N-terminus, the 339-residue chain is Uroporphyrinogen decarboxylase (339 aa).

Substrate is bound by residues 23 to 27, Asp72, Tyr147, Thr202, and His315; that span reads RQAGR.

This sequence belongs to the uroporphyrinogen decarboxylase family. As to quaternary structure, homodimer.

The protein resides in the cytoplasm. The enzyme catalyses uroporphyrinogen III + 4 H(+) = coproporphyrinogen III + 4 CO2. Its pathway is porphyrin-containing compound metabolism; protoporphyrin-IX biosynthesis; coproporphyrinogen-III from 5-aminolevulinate: step 4/4. Its function is as follows. Catalyzes the decarboxylation of four acetate groups of uroporphyrinogen-III to yield coproporphyrinogen-III. The sequence is that of Uroporphyrinogen decarboxylase from Geotalea uraniireducens (strain Rf4) (Geobacter uraniireducens).